We begin with the raw amino-acid sequence, 439 residues long: tRNA modification GTPase MnmE (439 aa).

Positions 26, 88, and 127 each coordinate (6S)-5-formyl-5,6,7,8-tetrahydrofolate. Positions 220 to 367 (GARLALIGRP…LRDAIHTALI (148 aa)) constitute a TrmE-type G domain. Asn230 contacts K(+). GTP is bound by residues 230-235 (NAGKSS), 249-255 (TPIPGTT), and 274-277 (DTAG). Ser234 provides a ligand contact to Mg(2+). The K(+) site is built by Thr249, Ile251, and Thr254. Mg(2+) is bound at residue Thr255. Lys439 contributes to the (6S)-5-formyl-5,6,7,8-tetrahydrofolate binding site.

Belongs to the TRAFAC class TrmE-Era-EngA-EngB-Septin-like GTPase superfamily. TrmE GTPase family. As to quaternary structure, homodimer. Heterotetramer of two MnmE and two MnmG subunits. The cofactor is K(+).

The protein localises to the cytoplasm. Its function is as follows. Exhibits a very high intrinsic GTPase hydrolysis rate. Involved in the addition of a carboxymethylaminomethyl (cmnm) group at the wobble position (U34) of certain tRNAs, forming tRNA-cmnm(5)s(2)U34. This Deinococcus geothermalis (strain DSM 11300 / CIP 105573 / AG-3a) protein is tRNA modification GTPase MnmE.